The following is a 581-amino-acid chain: AP2-like ethylene-responsive transcription factor AIL6 (581 aa).

Disordered regions lie at residues 105–132 and 205–240; these read VRYS…HHNQ and NNTN…TDSE. Low complexity-rich tracts occupy residues 108 to 122 and 218 to 232; these read SDNS…SLTQ and RGNN…NNNN. 2 consecutive DNA-binding regions (AP2/ERF) follow at residues 268 to 331 and 367 to 425; these read IYRG…TNFP and IYRG…TNFE.

It belongs to the AP2/ERF transcription factor family. AP2 subfamily. As to expression, expressed in roots, seedlings, hypocotyl, inflorescence, siliques, and pistils. Also detected at low levels in leaves.

The protein localises to the nucleus. In terms of biological role, probably acts as a transcriptional activator. Binds to the GCC-box pathogenesis-related promoter element. May be involved in the regulation of gene expression by stress factors and by components of stress signal transduction pathways. The chain is AP2-like ethylene-responsive transcription factor AIL6 from Arabidopsis thaliana (Mouse-ear cress).